The chain runs to 319 residues: Multivesicular body subunit 12B (319 aa).

A disordered region spans residues 1–50; it reads MRSCFCVRRSRDPPPPQPPPPPPQRGTDQSTMPEVKDLSEALPETSMDPI. Residues 13–24 are compositionally biased toward pro residues; sequence PPPPQPPPPPPQ. Phosphoserine is present on residues Ser46 and Ser101. An MABP domain is found at 47 to 193; sequence MDPITGVGVV…SMGIWYRMGR (147 aa). A phosphothreonine mark is found at Thr122, Thr204, and Thr205. The disordered stretch occupies residues 195 to 222; sequence PRNHDSSQPTTPSQSSAASTPAPNLPRH. Positions 200 to 216 are enriched in low complexity; it reads SSQPTTPSQSSAASTPA. Position 224 is a phosphoserine (Ser224). Residues 254–303 form the UMA domain; it reads MDGVPFMISEKFSCVPESMQPFDLLGITIKSLAEIEKEYEYSFRTEQSAA. Positions 299-319 are disordered; that stretch reads EQSAAARLPPSPTRCQQIPQS. Ser309 carries the phosphoserine modification.

Belongs to the MVB12 family. In terms of assembly, component of the ESCRT-I complex (endosomal sorting complex required for transport I) which consists of TSG101, VPS28, a VPS37 protein (VPS37A to -D) and MVB12A or MVB12B in a 1:1:1:1 stoichiometry. Interacts with TSG101; the association appears to be mediated by the TSG101-VPS37 binary subcomplex. Interacts with VPS28. Interacts with VPS37B; the association appears to be mediated by the TSG101-VPS37 binary subcomplex. Interacts with VPS37C; the association appears to be mediated by the TSG101-VPS37 binary subcomplex.

The protein resides in the endosome. The protein localises to the late endosome membrane. Component of the ESCRT-I complex, a regulator of vesicular trafficking process. Required for the sorting of endocytic ubiquitinated cargos into multivesicular bodies. The polypeptide is Multivesicular body subunit 12B (MVB12B) (Homo sapiens (Human)).